The chain runs to 374 residues: Peptide chain release factor 2 (374 aa).

Gln-252 carries the N5-methylglutamine modification.

This sequence belongs to the prokaryotic/mitochondrial release factor family. Methylated by PrmC. Methylation increases the termination efficiency of RF2.

It is found in the cytoplasm. Functionally, peptide chain release factor 2 directs the termination of translation in response to the peptide chain termination codons UGA and UAA. The chain is Peptide chain release factor 2 from Xanthomonas euvesicatoria pv. vesicatoria (strain 85-10) (Xanthomonas campestris pv. vesicatoria).